We begin with the raw amino-acid sequence, 736 residues long: Protein kinase C epsilon type (736 aa).

The region spanning 1-117 (MVVFNGLLKI…NGSRHFEDWI (117 aa)) is the C2 domain. Residue S62 is modified to Phosphoserine. The segment at 169–220 (GHKFMATYLRQPTYCSHCRDFIWGVIGKQGYQCQVCTCVVHKRCHELIITKV) adopts a Phorbol-ester/DAG-type 1 zinc-finger fold. A Phosphothreonine modification is found at T228. S234 carries the phosphoserine modification. Residues 242 to 292 (PHKFGIHNYKVPTFCDHCGSLLWGLLRQGLQCKVCKMNVHRRCETNVAPNC) form a Phorbol-ester/DAG-type 2 zinc finger. Position 309 is a phosphothreonine (T309). Residues 310-356 (PDKITNSGQRRKKLIGGAESPQPTSGSSPSEEDRSKSAPTSPCDQEL) are disordered. Residues S316, S329, and S337 each carry the phosphoserine modification. S346 carries the phosphoserine; by GSK3-beta modification. T349 bears the Phosphothreonine mark. S350 is subject to Phosphoserine; by MAPK11 and MAPK14. At S368 the chain carries Phosphoserine; by autocatalysis. Residues 369–397 (FDNRGEEHRAASSTDGQLGSPENGEVRQG) are disordered. Phosphoserine is present on S388. A Protein kinase domain is found at 407–667 (FNFIKVLGKG…EDAIKQHPFF (261 aa)). ATP is bound by residues 413 to 421 (LGKGSFGKV) and K436. D531 acts as the Proton acceptor in catalysis. Phosphothreonine; by PDPK1 is present on T565. Residues 668–736 (KEIDWVLLEQ…FSYFGEDLMP (69 aa)) enclose the AGC-kinase C-terminal domain. T702 carries the phosphothreonine modification. A Phosphothreonine; by autocatalysis modification is found at T709. S728 carries the phosphoserine; by autocatalysis modification.

Belongs to the protein kinase superfamily. AGC Ser/Thr protein kinase family. PKC subfamily. In terms of assembly, forms a ternary complex with TRIM63 and RACK1/GN2BL1. Can form a complex with PDLIM5 and N-type calcium channel. Interacts with COPB1. Interacts with DGKQ. Interacts with STAT3. Interacts with YWHAB. Interacts with HSP90AB1; promotes functional activation in a heat shock-dependent manner. Interacts (via phorbol-ester/DAG-type 2 domain) with PRPH and VIM. Interacts with NLRP5/MATER. In terms of processing, phosphorylation on Thr-565 by PDPK1 triggers autophosphorylation on Ser-728. Phosphorylation in the hinge domain at Ser-350 by MAPK11 or MAPK14, Ser-346 by GSK3B and Ser-368 by autophosphorylation is required for interaction with YWHAB. In response to growth factors, phosphorylated at Thr-702 and Ser-728 by the mTORC2 complex, promoting autophosphorylation and activation of PRKCE.

It localises to the cytoplasm. The protein localises to the cytoskeleton. It is found in the cell membrane. The protein resides in the perinuclear region. Its subcellular location is the nucleus. It catalyses the reaction L-seryl-[protein] + ATP = O-phospho-L-seryl-[protein] + ADP + H(+). It carries out the reaction L-threonyl-[protein] + ATP = O-phospho-L-threonyl-[protein] + ADP + H(+). Its activity is regulated as follows. Novel PKCs (PRKCD, PRKCE, PRKCH and PRKCQ) are calcium-insensitive, but activated by diacylglycerol (DAG) and phosphatidylserine. Three specific sites; Thr-565 (activation loop of the kinase domain), Thr-709 (turn motif) and Ser-728 (hydrophobic region), need to be phosphorylated for its full activation. Functionally, calcium-independent, phospholipid- and diacylglycerol (DAG)-dependent serine/threonine-protein kinase that plays essential roles in the regulation of multiple cellular processes linked to cytoskeletal proteins, such as cell adhesion, motility, migration and cell cycle, functions in neuron growth and ion channel regulation, and is involved in immune response, cancer cell invasion and regulation of apoptosis. Mediates cell adhesion to the extracellular matrix via integrin-dependent signaling, by mediating angiotensin-2-induced activation of integrin beta-1 (ITGB1) in cardiac fibroblasts. Phosphorylates MARCKS, which phosphorylates and activates PTK2/FAK, leading to the spread of cardiomyocytes. Involved in the control of the directional transport of ITGB1 in mesenchymal cells by phosphorylating vimentin (VIM), an intermediate filament (IF) protein. In epithelial cells, associates with and phosphorylates keratin-8 (KRT8), which induces targeting of desmoplakin at desmosomes and regulates cell-cell contact. Phosphorylates IQGAP1, which binds to CDC42, mediating epithelial cell-cell detachment prior to migration. During cytokinesis, forms a complex with YWHAB, which is crucial for daughter cell separation, and facilitates abscission by a mechanism which may implicate the regulation of RHOA. In cardiac myocytes, regulates myofilament function and excitation coupling at the Z-lines, where it is indirectly associated with F-actin via interaction with COPB1. During endothelin-induced cardiomyocyte hypertrophy, mediates activation of PTK2/FAK, which is critical for cardiomyocyte survival and regulation of sarcomere length. Plays a role in the pathogenesis of dilated cardiomyopathy via persistent phosphorylation of troponin I (TNNI3). Involved in nerve growth factor (NFG)-induced neurite outgrowth and neuron morphological change independently of its kinase activity, by inhibition of RHOA pathway, activation of CDC42 and cytoskeletal rearrangement. May be involved in presynaptic facilitation by mediating phorbol ester-induced synaptic potentiation. Phosphorylates gamma-aminobutyric acid receptor subunit gamma-2 (GABRG2), which reduces the response of GABA receptors to ethanol and benzodiazepines and may mediate acute tolerance to the intoxicating effects of ethanol. Upon PMA treatment, phosphorylates the capsaicin- and heat-activated cation channel TRPV1, which is required for bradykinin-induced sensitization of the heat response in nociceptive neurons. Is able to form a complex with PDLIM5 and N-type calcium channel, and may enhance channel activities and potentiates fast synaptic transmission by phosphorylating the pore-forming alpha subunit CACNA1B (CaV2.2). Downstream of TLR4, plays an important role in the lipopolysaccharide (LPS)-induced immune response by phosphorylating and activating TICAM2/TRAM, which in turn activates the transcription factor IRF3 and subsequent cytokines production. In differentiating erythroid progenitors, is regulated by EPO and controls the protection against the TNFSF10/TRAIL-mediated apoptosis, via BCL2. May be involved in the regulation of the insulin-induced phosphorylation and activation of AKT1. Phosphorylates NLRP5/MATER and may thereby modulate AKT pathway activation in cumulus cells. Phosphorylates and activates LRRK1, which phosphorylates RAB proteins involved in intracellular trafficking. In Oryctolagus cuniculus (Rabbit), this protein is Protein kinase C epsilon type (PRKCE).